We begin with the raw amino-acid sequence, 442 residues long: tRNA modification GTPase MnmE (442 aa).

R27, E84, and K124 together coordinate (6S)-5-formyl-5,6,7,8-tetrahydrofolate. In terms of domain architecture, TrmE-type G spans 221 to 366; that stretch reads GLHVVIVGAP…LLDALQAFAE (146 aa). GTP is bound by residues 231 to 236, 250 to 256, and 275 to 278; these read NAGKSS, SEEAGTT, and DTAG. Residues S235 and T256 each contribute to the Mg(2+) site. Residue K442 participates in (6S)-5-formyl-5,6,7,8-tetrahydrofolate binding.

This sequence belongs to the TRAFAC class TrmE-Era-EngA-EngB-Septin-like GTPase superfamily. TrmE GTPase family. As to quaternary structure, homodimer. Heterotetramer of two MnmE and two MnmG subunits. Requires K(+) as cofactor.

Its subcellular location is the cytoplasm. Exhibits a very high intrinsic GTPase hydrolysis rate. Involved in the addition of a carboxymethylaminomethyl (cmnm) group at the wobble position (U34) of certain tRNAs, forming tRNA-cmnm(5)s(2)U34. This chain is tRNA modification GTPase MnmE, found in Brucella suis (strain ATCC 23445 / NCTC 10510).